The sequence spans 1248 residues: Ankyrin repeat and sterile alpha motif domain-containing protein 1B (1248 aa).

ANK repeat units follow at residues 2–31, 58–87, 91–120, 127–156, 160–189, 193–222, and 225–254; these read GKDQ…GGIL, SGYT…STNV, KGYF…SHSR, ENET…DPTI, KLET…NLMS, RKHT…DVSC, and EKGS…DANI. A disordered region spans residues 296–322; the sequence is EPVQEDATQETHISSPVESPSQKTKSE. A compositionally biased stretch (polar residues) spans 305 to 322; the sequence is ETHISSPVESPSQKTKSE. A phosphoserine mark is found at Ser-309, Ser-310, Ser-314, Ser-353, and Ser-364. 3 disordered regions span residues 367–400, 474–514, and 558–623; these read ELGK…NTCG, APSP…PDTA, and SFTA…ENPF. The span at 371-384 shows a compositional bias: polar residues; that stretch reads NGSQSVRTSSTINL. Acidic residues predominate over residues 388–397; that stretch reads EVEEEDDDEN. A Phosphothreonine modification is found at Thr-503. Phosphoserine occurs at positions 507 and 510. A compositionally biased stretch (low complexity) spans 558–575; the sequence is SFTASPPASPPTSSVGTT. Basic and acidic residues predominate over residues 577 to 601; sequence VKNEGTNHTDDLSRQDDNDPPKEYD. Phosphoserine is present on Ser-738. Positions 749–777 are disordered; it reads EKTSRVNWSESSTAEHSSKGNSERTPSFT. The span at 753–763 shows a compositional bias: polar residues; that stretch reads RVNWSESSTAE. At Thr-773 the chain carries Phosphothreonine. At Ser-775 the chain carries Phosphoserine. 2 SAM domains span residues 810-876 and 884-949; these read CPVQ…LPKM and YHPT…RLHD. At Tyr-901 the chain carries Phosphotyrosine. The Nuclear localization signal motif lies at 935-938; sequence HRKR. A disordered region spans residues 944–989; the sequence is GDRLHDDPPQKPPRSITLREPSGNHTPPQLSPSLSQSTYTTGGSLD. Low complexity predominate over residues 969–984; it reads TPPQLSPSLSQSTYTT. Ser-974 bears the Phosphoserine mark. Tyr-1007 is modified (phosphotyrosine). A PID domain is found at 1056–1213; the sequence is IFQSCDYKAF…SFENKPSKPI (158 aa). A disordered region spans residues 1197–1248; it reads HSSTLPESFENKPSKPIPKPRVSIRKSVDLLHASHTGQEPSERHTEEALRKF. The span at 1236 to 1248 shows a compositional bias: basic and acidic residues; the sequence is PSERHTEEALRKF.

In terms of assembly, isoform 3 interacts with DLG4. Interacts with EPHA8. Isoform 2 interacts with COIL. Isoform 4 interacts with APP and EPHA8. Isoform 6 interacts with EPHA8. In terms of processing, isoform 3 nuclear translocation requires an NMDAR-dependent proteolytic cleavage. As to expression, highly expressed in marrow from patients with pre-B ALL associated with the t(1;19) translocation. Strongly expressed in brain and testis. Expressed in fetal brain. Isoform 4 is highly expressed in brain (at protein level). Isoform 6 is expressed in brain and several cancer cell lines.

It localises to the cytoplasm. Its subcellular location is the nucleus. The protein localises to the postsynaptic density. It is found in the cell projection. The protein resides in the dendritic spine. It localises to the cajal body. Functionally, isoform 2 may participate in the regulation of nucleoplasmic coilin protein interactions in neuronal and transformed cells. Its function is as follows. Isoform 3 can regulate global protein synthesis by altering nucleolar numbers. Isoform 4 may play a role as a modulator of APP processing. Overexpression can down-regulate APP processing. This Homo sapiens (Human) protein is Ankyrin repeat and sterile alpha motif domain-containing protein 1B (ANKS1B).